Here is a 223-residue protein sequence, read N- to C-terminus: N-terminal Xaa-Pro-Lys N-methyltransferase 1 (223 aa).

Met-1 is subject to N-acetylmethionine. Position 2 is an N-acetylthreonine; in N-terminal Xaa-Pro-Lys N-methyltransferase 1, N-terminally processed (Thr-2). Residues Gly-69, Arg-74, 91–93, 119–120, and Gln-135 each bind S-adenosyl-L-methionine; these read DVT and LQ.

It belongs to the methyltransferase superfamily. NTM1 family.

It localises to the nucleus. The enzyme catalyses N-terminal L-alanyl-L-prolyl-L-lysyl-[protein] + 3 S-adenosyl-L-methionine = N-terminal N,N,N-trimethyl-L-alanyl-L-prolyl-L-lysyl-[protein] + 3 S-adenosyl-L-homocysteine + 3 H(+). It carries out the reaction N-terminal L-seryl-L-prolyl-L-lysyl-[protein] + 3 S-adenosyl-L-methionine = N-terminal N,N,N-trimethyl-L-seryl-L-prolyl-L-lysyl-[protein] + 3 S-adenosyl-L-homocysteine + 3 H(+). It catalyses the reaction N-terminal L-prolyl-L-prolyl-L-lysyl-[protein] + 2 S-adenosyl-L-methionine = N-terminal N,N-dimethyl-L-prolyl-L-prolyl-L-lysyl-[protein] + 2 S-adenosyl-L-homocysteine + 2 H(+). Functionally, distributive alpha-N-methyltransferase that methylates the N-terminus of target proteins containing the N-terminal motif [Ala/Gly/Pro/Ser]-Pro-Lys when the initiator Met is cleaved. Specifically catalyzes mono-, di- or tri-methylation of the exposed alpha-amino group of the Ala, Gly or Ser residue in the [Ala/Gly/Ser]-Pro-Lys motif and mono- or di-methylation of Pro in the Pro-Pro-Lys motif. Some of the substrates may be primed by NTMT2-mediated monomethylation. Catalyzes the trimethylation of the N-terminal Gly in CENPA (after removal of Met-1). Responsible for the N-terminal methylation of KLHL31, MYL2, MYL3, RB1, RCC1, RPL23A and SET. Required during mitosis for normal bipolar spindle formation and chromosome segregation via its action on RCC1. In Bos taurus (Bovine), this protein is N-terminal Xaa-Pro-Lys N-methyltransferase 1 (NTMT1).